The following is a 450-amino-acid chain: Interferon-induced protein 75 (450 aa).

Residues M1–Y108 enclose the HSR domain. Disordered regions lie at residues C131–V156 and L170–D225. Residues Q143–P154 are compositionally biased toward low complexity. A phosphoserine mark is found at S175 and S177. Positions S197 to P212 are enriched in basic and acidic residues. The residue at position 226 (S226) is a Phosphoserine. Disordered stretches follow at residues V238 to Q283 and A318 to A360. Positions K245–P267 are enriched in basic residues. The short motif at K251 to K266 is the Nuclear localization signal element. The span at T343 to P353 shows a compositional bias: polar residues. The SAND domain maps to N358–F439.

The protein resides in the nucleus. In Mus caroli (Ryukyu mouse), this protein is Interferon-induced protein 75 (Ifi75).